Reading from the N-terminus, the 411-residue chain is Adenylosuccinate synthetase (411 aa).

GTP is bound by residues glycine 11 to lysine 17 and glycine 39 to threonine 41. Aspartate 12 (proton acceptor) is an active-site residue. Positions 12 and 39 each coordinate Mg(2+). IMP-binding positions include aspartate 12–lysine 15, asparagine 37–histidine 40, threonine 121, arginine 135, glutamine 215, threonine 230, and arginine 294. Histidine 40 (proton donor) is an active-site residue. A substrate-binding site is contributed by threonine 290–arginine 296. Residues arginine 296, lysine 322 to aspartate 324, and serine 400 to serine 402 contribute to the GTP site.

This sequence belongs to the adenylosuccinate synthetase family. Homodimer. It depends on Mg(2+) as a cofactor.

The protein resides in the cytoplasm. It carries out the reaction IMP + L-aspartate + GTP = N(6)-(1,2-dicarboxyethyl)-AMP + GDP + phosphate + 2 H(+). The protein operates within purine metabolism; AMP biosynthesis via de novo pathway; AMP from IMP: step 1/2. Plays an important role in the de novo pathway of purine nucleotide biosynthesis. Catalyzes the first committed step in the biosynthesis of AMP from IMP. This is Adenylosuccinate synthetase from Helicobacter pylori (strain Shi470).